The chain runs to 405 residues: Fragilysin (405 aa).

The N-terminal stretch at 1–25 (MFILNFNKMKNVKLLLMLGTAALLA) is a signal peptide. His-356 is a binding site for Zn(2+). Glu-357 is an active-site residue. Zn(2+) is bound by residues His-360 and His-366.

This sequence belongs to the peptidase M10C family. The cofactor is Zn(2+).

It localises to the secreted. The enzyme catalyses Broad proteolytic specificity, bonds hydrolyzed includes -Gly-|-Leu-, -Met-|-Leu-, -Phe-|-Leu-, -Cys-|-Leu-, -Leu-|-Gly-.. Functionally, diarrheal toxin that hydrolyzes gelatin, azocoll, actin, tropomyosin, and fibrinogen. This Bacteroides fragilis protein is Fragilysin (btfP).